A 502-amino-acid polypeptide reads, in one-letter code: Aspartyl/glutamyl-tRNA(Asn/Gln) amidotransferase subunit B (502 aa).

Residues 272 to 293 (TRHWHEDTRSTTSGRPKSDADD) are disordered.

This sequence belongs to the GatB/GatE family. GatB subfamily. As to quaternary structure, heterotrimer of A, B and C subunits.

It carries out the reaction L-glutamyl-tRNA(Gln) + L-glutamine + ATP + H2O = L-glutaminyl-tRNA(Gln) + L-glutamate + ADP + phosphate + H(+). It catalyses the reaction L-aspartyl-tRNA(Asn) + L-glutamine + ATP + H2O = L-asparaginyl-tRNA(Asn) + L-glutamate + ADP + phosphate + 2 H(+). Its function is as follows. Allows the formation of correctly charged Asn-tRNA(Asn) or Gln-tRNA(Gln) through the transamidation of misacylated Asp-tRNA(Asn) or Glu-tRNA(Gln) in organisms which lack either or both of asparaginyl-tRNA or glutaminyl-tRNA synthetases. The reaction takes place in the presence of glutamine and ATP through an activated phospho-Asp-tRNA(Asn) or phospho-Glu-tRNA(Gln). The sequence is that of Aspartyl/glutamyl-tRNA(Asn/Gln) amidotransferase subunit B from Paenarthrobacter aurescens (strain TC1).